The chain runs to 1092 residues: DNA polymerase delta catalytic subunit (1092 aa).

Positions 1 to 71 (MDGKRKFNGT…SRPPPPELDP (71 aa)) are disordered. The short motif at 4-19 (KRKFNGTSNGHAKKPR) is the Nuclear localization signal element. Residues C997, C1000, C1014, and C1017 each coordinate Zn(2+). Residues 997-1017 (CLGCKSLMPKGYEQACLCPHC) form a CysA-type zinc finger. The [4Fe-4S] cluster site is built by C1046, C1049, C1059, and C1064. The short motif at 1046–1064 (CQRCQESLHEEVICSNRDC) is the CysB motif element.

Belongs to the DNA polymerase type-B family. As to quaternary structure, catalytic component of the DNA polymerase delta complex consisting of three subunits: the catalytic subunit PolD1 and two accessory subunits PolD2/Pol31 and PolD3/Pol32. Within the delta complex, interacts with both PolD2 and PolD3, and is able to interact with PolD2 in the absence of PolD3. Interacts with PCNA and PCNA2. [4Fe-4S] cluster serves as cofactor. It depends on Mg(2+) as a cofactor. Expressed in ovaries (at the protein level). Expressed in embryos (at the protein level).

The protein localises to the nucleus. Its subcellular location is the nucleoplasm. It carries out the reaction DNA(n) + a 2'-deoxyribonucleoside 5'-triphosphate = DNA(n+1) + diphosphate. Inhibited by KCL. Also inhibited by carbonyldiphosphonate, aphidicolin and N-ethylmaleimide (NEM). As the catalytic component of the DNA polymerase delta complex, plays a crucial role in high fidelity genome replication, including lagging strand synthesis, DNA recombination and repair. Exhibits both DNA polymerase and 3'- to 5'-exonuclease activities. Required at the nucleus of rapidly dividing embryonic cells to activate genome replication during the earliest cell cycles. Likely to require the presence of accessory proteins PolD2 and PolD3 for full activity. This chain is DNA polymerase delta catalytic subunit, found in Drosophila melanogaster (Fruit fly).